Consider the following 311-residue polypeptide: Deacetoxycephalosporin C synthase (311 aa).

The Fe2OG dioxygenase domain occupies 154 to 267; that stretch reads DCEPLLRFRY…RTSSVFFLRP (114 aa).

The protein belongs to the iron/ascorbate-dependent oxidoreductase family. Fe cation serves as cofactor. It depends on L-ascorbate as a cofactor.

It carries out the reaction penicillin N + 2-oxoglutarate + O2 = deacetoxycephalosporin C + succinate + CO2 + H2O. It participates in antibiotic biosynthesis; cephalosporin C biosynthesis. Catalyzes the step from penicillin N to deacetoxy-cephalosporin C. This chain is Deacetoxycephalosporin C synthase (cefE), found in Streptomyces clavuligerus.